The chain runs to 78 residues: Metallothionein-like protein type 2 (78 aa).

Belongs to the metallothionein superfamily. Type 15 family.

Metallothioneins have a high content of cysteine residues that bind various heavy metals. This chain is Metallothionein-like protein type 2, found in Nicotiana glutinosa (Tobacco).